Reading from the N-terminus, the 427-residue chain is Transcobalamin-2 (427 aa).

The first 18 residues, 1-18 (MRHLGALLFLLGVLGALA), serve as a signal peptide directing secretion. Intrachain disulfides connect cysteine 21–cysteine 267, cysteine 116–cysteine 309, and cysteine 165–cysteine 205. Cob(II)alamin contacts are provided by residues glutamine 104, 152-156 (TSYYQ), histidine 190, 190-194 (HHSVD), asparagine 242, serine 245, glutamine 291, and 395-397 (WQL).

Belongs to the eukaryotic cobalamin transport proteins family. As to quaternary structure, interacts with CD320 (via LDL-receptor class A domains).

The protein localises to the secreted. In terms of biological role, primary vitamin B12-binding and transport protein. Delivers cobalamin to cells. In Pongo abelii (Sumatran orangutan), this protein is Transcobalamin-2 (TCN2).